The primary structure comprises 250 residues: N-acyl homoserine lactonase (250 aa).

Zn(2+) is bound by residues His104, His106, Asp108, His109, His169, Asp191, and His235.

It belongs to the metallo-beta-lactamase superfamily. In terms of assembly, monomer. Zn(2+) is required as a cofactor.

It carries out the reaction an N-acyl-L-homoserine lactone + H2O = an N-acyl-L-homoserine + H(+). The chain is N-acyl homoserine lactonase from Bacillus cereus.